The chain runs to 295 residues: 4-hydroxy-tetrahydrodipicolinate synthase (295 aa).

Thr46 is a pyruvate binding site. Residue Tyr134 is the Proton donor/acceptor of the active site. Lys162 (schiff-base intermediate with substrate) is an active-site residue. Ile205 lines the pyruvate pocket.

Belongs to the DapA family. As to quaternary structure, homotetramer; dimer of dimers.

Its subcellular location is the cytoplasm. The enzyme catalyses L-aspartate 4-semialdehyde + pyruvate = (2S,4S)-4-hydroxy-2,3,4,5-tetrahydrodipicolinate + H2O + H(+). The protein operates within amino-acid biosynthesis; L-lysine biosynthesis via DAP pathway; (S)-tetrahydrodipicolinate from L-aspartate: step 3/4. In terms of biological role, catalyzes the condensation of (S)-aspartate-beta-semialdehyde [(S)-ASA] and pyruvate to 4-hydroxy-tetrahydrodipicolinate (HTPA). The chain is 4-hydroxy-tetrahydrodipicolinate synthase from Anaeromyxobacter dehalogenans (strain 2CP-C).